A 271-amino-acid chain; its full sequence is Ribosomal RNA small subunit methyltransferase A (271 aa).

Asn-22, Leu-24, Gly-49, Glu-70, Asp-96, and Asn-116 together coordinate S-adenosyl-L-methionine.

This sequence belongs to the class I-like SAM-binding methyltransferase superfamily. rRNA adenine N(6)-methyltransferase family. RsmA subfamily.

It is found in the cytoplasm. The catalysed reaction is adenosine(1518)/adenosine(1519) in 16S rRNA + 4 S-adenosyl-L-methionine = N(6)-dimethyladenosine(1518)/N(6)-dimethyladenosine(1519) in 16S rRNA + 4 S-adenosyl-L-homocysteine + 4 H(+). Its function is as follows. Specifically dimethylates two adjacent adenosines (A1518 and A1519) in the loop of a conserved hairpin near the 3'-end of 16S rRNA in the 30S particle. May play a critical role in biogenesis of 30S subunits. The protein is Ribosomal RNA small subunit methyltransferase A of Sphingopyxis alaskensis (strain DSM 13593 / LMG 18877 / RB2256) (Sphingomonas alaskensis).